We begin with the raw amino-acid sequence, 339 residues long: Uroporphyrinogen decarboxylase (339 aa).

Substrate-binding positions include 23 to 27 (RQAGR), aspartate 72, tyrosine 147, serine 202, and histidine 315.

The protein belongs to the uroporphyrinogen decarboxylase family. As to quaternary structure, homodimer.

The protein resides in the cytoplasm. The catalysed reaction is uroporphyrinogen III + 4 H(+) = coproporphyrinogen III + 4 CO2. The protein operates within porphyrin-containing compound metabolism; protoporphyrin-IX biosynthesis; coproporphyrinogen-III from 5-aminolevulinate: step 4/4. Functionally, catalyzes the decarboxylation of four acetate groups of uroporphyrinogen-III to yield coproporphyrinogen-III. This Desulfotalea psychrophila (strain LSv54 / DSM 12343) protein is Uroporphyrinogen decarboxylase.